The following is a 139-amino-acid chain: Deoxyuridine 5'-triphosphate nucleotidohydrolase (139 aa).

Residues 58–60, asparagine 71, 75–77, and methionine 85 contribute to the substrate site; these read RSG and LID.

It belongs to the dUTPase family. The cofactor is Mg(2+).

The enzyme catalyses dUTP + H2O = dUMP + diphosphate + H(+). The protein operates within pyrimidine metabolism; dUMP biosynthesis; dUMP from dCTP (dUTP route): step 2/2. This enzyme is involved in nucleotide metabolism: it produces dUMP, the immediate precursor of thymidine nucleotides and it decreases the intracellular concentration of dUTP so that uracil cannot be incorporated into DNA. In Gamma-proteobacterium EBAC31A08, this protein is Deoxyuridine 5'-triphosphate nucleotidohydrolase.